A 497-amino-acid polypeptide reads, in one-letter code: Cytochrome P450 3A18 (497 aa).

Cys442 contacts heme.

Belongs to the cytochrome P450 family. It depends on heme as a cofactor.

Its subcellular location is the endoplasmic reticulum membrane. It localises to the microsome membrane. The enzyme catalyses an organic molecule + reduced [NADPH--hemoprotein reductase] + O2 = an alcohol + oxidized [NADPH--hemoprotein reductase] + H2O + H(+). Functionally, catalyzes 16-beta- and 6-alpha-hydroxylations of testosterone. This is Cytochrome P450 3A18 (Cyp3a18) from Rattus norvegicus (Rat).